A 432-amino-acid chain; its full sequence is Trigger factor (432 aa).

A PPIase FKBP-type domain is found at 161-246 (EDRVTIDFTG…LKKVEERELP (86 aa)).

The protein belongs to the FKBP-type PPIase family. Tig subfamily. Homodimer and monomer. In vivo most of the ribosomes are in complex with monomeric TF. Uncomplexed TF, however, is in a monomer-dimer equilibrium with approximately two thirds of TF existing in a dimeric state.

It localises to the cytoplasm. It carries out the reaction [protein]-peptidylproline (omega=180) = [protein]-peptidylproline (omega=0). Its function is as follows. Involved in protein export. Acts as a chaperone by maintaining the newly synthesized protein in an open conformation. Functions as a peptidyl-prolyl cis-trans isomerase. The chain is Trigger factor from Shigella boydii serotype 18 (strain CDC 3083-94 / BS512).